A 279-amino-acid chain; its full sequence is Large ribosomal subunit protein uL2 (279 aa).

Disordered regions lie at residues 1–43 (MGIK…TAGR) and 207–279 (KAGR…PGKH). Polar residues predominate over residues 8 to 22 (PTTNGRRNMTASDFS). Basic and acidic residues predominate over residues 23–33 (EITKTKPEKSL). The span at 34 to 43 (LDSQSHTAGR) shows a compositional bias: polar residues. Basic residues-rich tracts occupy residues 209 to 219 (GRTRWQGKRPT) and 254 to 279 (TLGK…PGKH).

Belongs to the universal ribosomal protein uL2 family. As to quaternary structure, part of the 50S ribosomal subunit. Forms a bridge to the 30S subunit in the 70S ribosome.

Its function is as follows. One of the primary rRNA binding proteins. Required for association of the 30S and 50S subunits to form the 70S ribosome, for tRNA binding and peptide bond formation. It has been suggested to have peptidyltransferase activity; this is somewhat controversial. Makes several contacts with the 16S rRNA in the 70S ribosome. The chain is Large ribosomal subunit protein uL2 from Lactiplantibacillus plantarum (strain ATCC BAA-793 / NCIMB 8826 / WCFS1) (Lactobacillus plantarum).